The primary structure comprises 450 residues: Serine/threonine-protein kinase SSN3 (450 aa).

A Protein kinase domain is found at 40 to 393 (YRIIGFISSG…AAQALQSPFF (354 aa)). ATP contacts are provided by residues 46–54 (ISSGTYGRV) and Lys71. The Proton acceptor role is filled by Asp173. 2 disordered regions span residues 307 to 341 (ASSHHNHHSHHHPHHHHGHYGSRNPPPPGGSNLEK) and 418 to 450 (QDDNDIRTSSLPGTKRSGLPDDSLIRPAKRQKE). Residues 310 to 326 (HHNHHSHHHPHHHHGHY) show a composition bias toward basic residues.

This sequence belongs to the protein kinase superfamily. CMGC Ser/Thr protein kinase family. CDC2/CDKX subfamily. In terms of assembly, component of the SRB8-11 complex, a regulatory module of the Mediator complex. Interacts with SSN8/FCC1. It depends on Mg(2+) as a cofactor.

It is found in the nucleus. The enzyme catalyses L-seryl-[protein] + ATP = O-phospho-L-seryl-[protein] + ADP + H(+). The catalysed reaction is L-threonyl-[protein] + ATP = O-phospho-L-threonyl-[protein] + ADP + H(+). It carries out the reaction [DNA-directed RNA polymerase] + ATP = phospho-[DNA-directed RNA polymerase] + ADP + H(+). Its function is as follows. Component of the SRB8-11 complex. The SRB8-11 complex is a regulatory module of the Mediator complex which is itself involved in regulation of basal and activated RNA polymerase II-dependent transcription. The SRB8-11 complex may be involved in the transcriptional repression of a subset of genes regulated by Mediator. It may inhibit the association of the Mediator complex with RNA polymerase II to form the holoenzyme complex. The SRB8-11 complex phosphorylates the C-terminal domain (CTD) of the largest subunit of RNA polymerase II. Required for normal growth and secondary metabolism. This is Serine/threonine-protein kinase SSN3 (SSN3) from Gibberella moniliformis (Maize ear and stalk rot fungus).